Here is a 1358-residue protein sequence, read N- to C-terminus: Tenascin-R (1358 aa).

Residues 1 to 31 (MGIDGETVVLKNMLIGVNLILLGSMLKPSEC) form the signal peptide. Positions 37–58 (TERAQRQTVEEEGGASSYNTSS) are disordered. N-linked (GlcNAc...) asparagine glycosylation occurs at Asn55. A coiled-coil region spans residues 127–157 (CASSSQVLQELLSRIEMLEREVSLLRDQCNT). Ser176 carries an O-linked (Xyl...) (chondroitin sulfate) serine glycan. Residues Asn180 and Asn198 are each glycosylated (N-linked (GlcNAc...) asparagine). EGF-like domains lie at 188–199 (CICNEGWFGKNC), 219–230 (CICDSEYSGDDC), and 250–261 (CVCEEPYTGEDC). The O-linked (Xyl...) (chondroitin sulfate) serine glycan is linked to Ser271. N-linked (GlcNAc...) asparagine glycosylation is present at Asn278. In terms of domain architecture, EGF-like 4 spans 281-292 (CLCQEGYAGEDC). 2 disulfide bridges follow: Cys297–Cys307 and Cys314–Cys323. The O-linked (Xyl...) (chondroitin sulfate) serine glycan is linked to Ser302. Residues 312 to 323 (CICEEGYQGPDC) form the EGF-like 5 domain. Fibronectin type-III domains lie at 328 to 420 (PPED…TPQG), 421 to 505 (LQFK…TVID), 506 to 597 (GPTQ…IDAP), 598 to 687 (KNLR…TELD), 688 to 777 (SPRD…FRPI), 778 to 865 (SHLH…TGID), 866 to 955 (PPKN…AMDS), 956 to 1042 (PMDL…TLLD), and 1043 to 1131 (PPDN…GGRV). 3 N-linked (GlcNAc...) asparagine glycosylation sites follow: Asn392, Asn470, and Asn581. Ser724 bears the Phosphoserine mark. Asn791, Asn869, Asn874, Asn1036, Asn1046, and Asn1261 each carry an N-linked (GlcNAc...) asparagine glycan. Positions 1129–1344 (GRVFSHPQDC…FVEMKMRPYI (216 aa)) constitute a Fibrinogen C-terminal domain.

This sequence belongs to the tenascin family. Interacts with BCAN and ACAN in a calcium-dependent manner. Interacts with SCN2B, PTPRZ1, and CSPG3. Forms oligomers. Isoforms 1 and 2 form respectively trimeric (tribrachion) and dimeric kink-armed rodlike structures, which are linked by disulfide bridges. Interacts with CNTN1, TNC and FN1. Contains N-linked oligosaccharides with a sulfated carbohydrate structures. Contains N-linked oligosaccharides, O-linked sialylated structures and O-linked chondroitin sulfate glycosaminoglycans. Brain-specific.

Its subcellular location is the secreted. It localises to the extracellular space. The protein resides in the extracellular matrix. Neural extracellular matrix (ECM) protein involved in interactions with different cells and matrix components. Theses interactions can influence cellular behavior by either evoking a stable adhesion and differentiation, or repulsion and inhibition of neurite growth. Binding to cell surface gangliosides inhibits RGD-dependent integrin-mediated cell adhesion and results in an inhibition of PTK2/FAK1 (FAK) phosphorylation and cell detachment. Binding to membrane surface sulfatides results in a oligodendrocyte adhesion and differentiation. Interaction with CNTN1 induces a repulsion of neurons and an inhibition of neurite outgrowth. Interacts with SCN2B may play a crucial role in clustering and regulation of activity of sodium channels at nodes of Ranvier. TNR-linked chondroitin sulfate glycosaminoglycans are involved in the interaction with FN1 and mediates inhibition of cell adhesion and neurite outgrowth. The highly regulated addition of sulfated carbohydrate structure may modulate the adhesive properties of TNR over the course of development and during synapse maintenance. The sequence is that of Tenascin-R (Tnr) from Mus musculus (Mouse).